We begin with the raw amino-acid sequence, 370 residues long: Protein PELPK1 (370 aa).

A signal peptide spans 1-34 (MALMKKSLSAALLSSPLLIICLIALLADPFSVGA). 52 tandem repeats follow at residues 43–47 (PEIPK), 49–53 (PELPK), 54–58 (FEVPK), 60–64 (PEFPK), 65–69 (PELPK), 71–75 (PEFPK), 76–80 (PELPK), 82–86 (PEIPK), 87–91 (PELPK), 93–97 (PEIPK), 98–102 (PEETK), 104–108 (PDIPK), 109–113 (LELPK), 115–119 (PEIPK), 120–124 (PELPK), 126–130 (PEIPK), 131–135 (PELPK), 137–141 (PEIQK), 142–146 (PELPK), 148–152 (PEIPK), 153–157 (PELPK), 159–163 (PEIPK), 164–168 (PDLPK), 175–179 (PEVPK), 186–190 (PEAPK), 192–196 (PEIPK), 197–201 (PELPK), 203–207 (PEVPK), 214–218 (PEIQK), 219–223 (PELPK), 225–229 (PELPK), 231–235 (PEIQK), 236–240 (PELPK), 242–246 (PEVPK), 247–251 (LEAPK), 253–257 (PEIQK), 258–262 (PELPK), 264–268 (PELPK), 270–274 (PEIQK), 275–279 (PELPK), 281–285 (PEIQK), 286–290 (PELPK), 292–296 (PEVPK), 303–307 (PEVPK), 314–318 (PEIPK), 319–323 (PELPK), 325–329 (PEVPK), 330–334 (PELPK), 336–340 (PEITK), 344–348 (PEIPK), 355–359 (PQLPK), and 361–365 (PEFPK). The tract at residues 43-365 (PEIPKLPELP…QLPKLPEFPK (323 aa)) is 52 X 5 AA tandem repeat of P-[DEGQ]-[AEFLIV]-[QPT]-K. The segment covering 65–223 (PELPKLPEFP…PEIQKPELPK (159 aa)) has biased composition (basic and acidic residues). A disordered region spans residues 65–370 (PELPKLPEFP…PEFPKVPGTP (306 aa)). Residues 232–262 (EIQKPELPKLPEVPKLEAPKVPEIQKPELPK) are compositionally biased toward basic and acidic residues. 2 stretches are compositionally biased toward basic and acidic residues: residues 271-296 (EIQKPELPKMPEIQKPELPKVPEVPK) and 306-334 (PKSEAPKFPEIPKPELPKIPEVPKPELPK).

It localises to the secreted. The protein resides in the cell wall. Positive regulator of germination and plant growth. The polypeptide is Protein PELPK1 (Arabidopsis thaliana (Mouse-ear cress)).